Here is a 269-residue protein sequence, read N- to C-terminus: Probable molybdenum ABC transporter permease protein HVO_B0370 (269 aa).

6 helical membrane-spanning segments follow: residues 26 to 46, 69 to 89, 100 to 120, 140 to 160, 198 to 218, and 243 to 263; these read LLLA…LVFA, VVAA…LAYW, VILA…GMLL, SLFG…VVTA, ILAG…ATLM, and FPVA…VHAL. The 194-residue stretch at 65–258 folds into the ABC transmembrane type-1 domain; it reads ATNSVVAATL…LVGIAVGAIL (194 aa).

Belongs to the binding-protein-dependent transport system permease family. In terms of assembly, the complex is composed of two ATP-binding proteins, two transmembrane proteins (HVO_B0370) and a solute-binding protein (HVO_B0369).

The protein resides in the cell membrane. Functionally, part of an ABC transporter complex involved in molybdenum import. Responsible for the translocation of the substrate across the membrane. This Haloferax volcanii (strain ATCC 29605 / DSM 3757 / JCM 8879 / NBRC 14742 / NCIMB 2012 / VKM B-1768 / DS2) (Halobacterium volcanii) protein is Probable molybdenum ABC transporter permease protein HVO_B0370.